Consider the following 56-residue polypeptide: Attractin (56 aa).

Cystine bridges form between cysteine 4-cysteine 41, cysteine 13-cysteine 33, and cysteine 20-cysteine 26. Asparagine 25 is a glycosylation site (N-linked (GlcNAc...) asparagine).

As to expression, produced by the albumen gland of the egg cordons.

The protein localises to the secreted. Functionally, water-borne pheromone that attract the marine mollusk Aplysia into breeding aggregations and coordinate male and female reproductive behavior within the aggregation. The polypeptide is Attractin (ATT) (Aplysia depilans (Sea hare)).